The chain runs to 303 residues: Glutathione transport system permease protein GsiD (303 aa).

Helical transmembrane passes span 40-60 (AMTAALFVILLIVVAIFARWI), 105-125 (LAAGVFAVFIGAAIGTLLGLL), 144-164 (LFAFPGILLAIAVVAVLGSGI), 165-185 (ANVIIAVAIFSIPAFARLVRG), 222-242 (IVVFFTMRIGTSIISAASLSF), and 266-286 (VIAPHVAVFPVLAIFLTVLAF). The 190-residue stretch at 101-290 (AQISLAAGVF…LTVLAFNLLG (190 aa)) folds into the ABC transmembrane type-1 domain.

Belongs to the binding-protein-dependent transport system permease family. As to quaternary structure, the complex is composed of two ATP-binding proteins (GsiA), two transmembrane proteins (GsiC and GsiD) and a solute-binding protein (GsiB).

The protein resides in the cell inner membrane. Functionally, part of the ABC transporter complex GsiABCD involved in glutathione import. Probably responsible for the translocation of the substrate across the membrane. This chain is Glutathione transport system permease protein GsiD, found in Shigella dysenteriae serotype 1 (strain Sd197).